Here is a 681-residue protein sequence, read N- to C-terminus: MDSDIQRQWGELAEEVRGHQFRYYVKDAPVISDGQFDELLRRLTALEEQYPELRTPDSPTQLVGGAGFVTEFRSVDHLERMLSLDNAFSSDELTAWDARVRGDIGQEPEYLCELKIDGVALSLVYENGVLVRGATRGDGRSGEDVTLNARTIEDVPERLAKSEKYPIPALLEVRGEVFFRLEDFEALNASLVEESKPPFANPRNSAAGSLRQKNPAITARRRLRMICHGLGRAEGFSPESLHDAYLALGEWGLPVSTHTTKVRGIAKVQERVNYWAEHRHDVEHEIDGVVVKVDTVALQRRLGSTSRAPRWAIAYKYPPEEATTELLDIRVSVGRTGRVTPFAYMTPVKVAGSTVSLATLHNASEVKRKGVLIGDTVVIRKAGDVIPEVLGPVADLRNGNEREFVMPTACPECGTTLAHEKEGDADIRCPNSRSCPAQLRERVFHVAGRGAFDIEALGYEAAIALLAAGVIEDEGDLFGLTADDLLRTDLFKTKSGALSANGARLLDNLDKAKQQPLWRVLVALSIRHVGPTAARALATEFGDLEAIEGASVEQLAAVEGVGATIAAAVVDWFSVDWHRAIVDKWRAAGVRTADERDDSIPRNLEGLSIVVTGSLPGFSRDEAKEAIIARGGKSASSVSKKTAFVVVGDSPGSKYDKAVELGVTILDEDGFRALLADGPPA.

NAD(+)-binding positions include 33-37, 83-84, and glutamate 113; these read DGQFD and SL. The active-site N6-AMP-lysine intermediate is lysine 115. NAD(+)-binding residues include arginine 136, glutamate 176, lysine 292, and lysine 316. Zn(2+)-binding residues include cysteine 410, cysteine 413, cysteine 429, and cysteine 435. Residues 599 to 681 enclose the BRCT domain; the sequence is SIPRNLEGLS…RALLADGPPA (83 aa).

This sequence belongs to the NAD-dependent DNA ligase family. LigA subfamily. Mg(2+) serves as cofactor. It depends on Mn(2+) as a cofactor.

It carries out the reaction NAD(+) + (deoxyribonucleotide)n-3'-hydroxyl + 5'-phospho-(deoxyribonucleotide)m = (deoxyribonucleotide)n+m + AMP + beta-nicotinamide D-nucleotide.. Its function is as follows. DNA ligase that catalyzes the formation of phosphodiester linkages between 5'-phosphoryl and 3'-hydroxyl groups in double-stranded DNA using NAD as a coenzyme and as the energy source for the reaction. It is essential for DNA replication and repair of damaged DNA. The sequence is that of DNA ligase from Mycobacteroides abscessus (strain ATCC 19977 / DSM 44196 / CCUG 20993 / CIP 104536 / JCM 13569 / NCTC 13031 / TMC 1543 / L948) (Mycobacterium abscessus).